A 520-amino-acid polypeptide reads, in one-letter code: Trichothecene O-acetyltransferase TRI3 (520 aa).

Residues 1–23 are disordered; sequence MGSKLPELPKLSPEKHRWEKSNV. A compositionally biased stretch (basic and acidic residues) spans 12 to 23; that stretch reads SPEKHRWEKSNV.

It belongs to the trichothecene O-acetyltransferase family.

The protein operates within sesquiterpene biosynthesis; trichothecene biosynthesis. In terms of biological role, trichothecene O-acetyltransferase; part of the gene cluster that mediates the production of the antimicrobial trichothecene harzianum A (HA) that plays a role in Botrytis cinerea antagonistic activity and plant defense priming. The biosynthesis of harzianum A begins with the cyclization of farnesyl diphosphate to trichodiene and is catalyzed by the trichodiene synthase TRI5. Trichodiene undergoes a series of oxygenations catalyzed by the cytochrome P450 monooxygenase TRI4. TRI4 controls the addition of 3 oxygens at C-2, C-11, and the C-12, C-13-epoxide to form the intermediate isotrichodiol. Isotrichodiol then undergoes a non-enzymatic isomerization and cyclization to form 12,13-epoxytrichothec-9-ene (EPT) which is further converted to trichodermol by the cytochrome P450 monooxygenase TRI11 via C-4 hydroxylation. The last step of HA synthesis is esterification of an octatriendioyl moiety to the C-4 oxygen of trichodermol. The octatriendioyl moiety is probably produced by the polyketide synthase TRI17 and the esterification performed by the trichothecene O-acetyltransferase TRI3. This is Trichothecene O-acetyltransferase TRI3 from Trichoderma arundinaceum.